A 145-amino-acid chain; its full sequence is Large ribosomal subunit protein uL13 (145 aa).

This sequence belongs to the universal ribosomal protein uL13 family. Part of the 50S ribosomal subunit. Interacts weakly with proteins L3 and L6.

Functionally, this protein is one of the early assembly proteins of the 50S ribosomal subunit. Binds to 23S rRNA. The protein is Large ribosomal subunit protein uL13 of Haloarcula marismortui (strain ATCC 43049 / DSM 3752 / JCM 8966 / VKM B-1809) (Halobacterium marismortui).